The following is a 500-amino-acid chain: NAD(P)H-quinone oxidoreductase chain 4, chloroplastic (500 aa).

The next 14 helical transmembrane spans lie at 4–24, 35–55, 87–107, 113–130, 134–154, 167–187, 208–228, 242–262, 274–294, 305–325, 330–350, 386–406, 416–436, and 463–483; these read FPWLTLIVVFPIFAGCFIFFL, YTMGICLLELLIMTYVFCYHF, IGPILLTGFITTLATLAAWPV, LFHFLMLAMYSGQIGLFS, LLLFFMMWELELIPVYLLLSM, FILYTAGGSIFLLIGVLGMGL, GLEILLYFGFLIAFAVKLPII, HYSTCMLLAGILLKMGAYGLI, SIFSPWLVIVGTIQIIYAALT, IAYSSVSHMGFIIIGIGSLTN, GAILQLLSHGFIGAALFFLGG, LALPGMSGFVAELMVFLGIIT, IIITLVMAIGIILTPIYLLSM, and FVSICIFLPVIAIGIYPDLVI.

The protein belongs to the complex I subunit 4 family.

It is found in the plastid. It localises to the chloroplast thylakoid membrane. It carries out the reaction a plastoquinone + NADH + (n+1) H(+)(in) = a plastoquinol + NAD(+) + n H(+)(out). The enzyme catalyses a plastoquinone + NADPH + (n+1) H(+)(in) = a plastoquinol + NADP(+) + n H(+)(out). In Lemna minor (Common duckweed), this protein is NAD(P)H-quinone oxidoreductase chain 4, chloroplastic.